A 208-amino-acid polypeptide reads, in one-letter code: 2-phospho-L-lactate guanylyltransferase (208 aa).

The protein belongs to the CofC family. Homodimer.

It catalyses the reaction (2S)-2-phospholactate + GTP + H(+) = (2S)-lactyl-2-diphospho-5'-guanosine + diphosphate. It functions in the pathway cofactor biosynthesis; coenzyme F420 biosynthesis. In terms of biological role, guanylyltransferase that catalyzes the activation of (2S)-2-phospholactate (2-PL) as (2S)-lactyl-2-diphospho-5'-guanosine, via the condensation of 2-PL with GTP. It is involved in the biosynthesis of coenzyme F420, a hydride carrier cofactor. The polypeptide is 2-phospho-L-lactate guanylyltransferase (Methanosarcina mazei (strain ATCC BAA-159 / DSM 3647 / Goe1 / Go1 / JCM 11833 / OCM 88) (Methanosarcina frisia)).